A 1385-amino-acid chain; its full sequence is MMSLRLFSILLATVVSGAWGWGYYGCNEELVGPLYARSLGASSYYGLFTTARFARLHGISGWSPRIGDPNPWLQIDLMKKHRIRAVATQGAFNSWDWVTRYMLLYGDRVDSWTPFYQKGHNATFFGNVNDSAVVRHDLHYHFTARYIRIVPLAWNPRGKIGLRLGIYGCPYTSSILYFDGDDAISYRFQRGASQSLWDVFAFSFKTEEKDGLLLHTEGSQGDYVTLELQGAHLLLHMSLGSSPIQPRPGHTTVSLGGVLNDLSWHYVRVDRYGRDANFTLDGYAHHFVLNGDFERLNLENEIFIGGLVGAARKNLAYRHNFRGCIENVIYNRINIAEMAVMRHSRITFEGNVAFRCLDPVPHPINFGGPHNFVQVPGFPRRGRLAVSFRFRTWDLTGLLLFSHLGDGLGHVELMLSEGQVNVSIAQTGRKKLQFAAGYRLNDGFWHEVNFVAQENHAVISIDDVEGAEVRVSYPLLIRTGTSYFFGGCPKPASRWGCHSNQTAFHGCMELLKVDGQLVNLTLVEFRKLGYFAEVLFDTCGITDRCSPNMCEHDGRCYQSWDDFICYCELTGYKGVTCHEPLYKESCEAYRLSGKYSGNYTIDPDGSGPLKPFVVYCDIRENRAWTVVRHDRLWTTRVTGSSMDRPFLGAIQYWNASWEEVSALANASQHCEQWIEFSCYNSRLLNTAGGYPYSFWIGRNEEQHFYWGGSQPGIQRCACGLDQSCVDPALHCNCDADQPQWRTDKGLLTFVDHLPVTQVVVGDTNRSNSEAQFFLRPLRCYGDRNSWNTISFHTGAALRFPPIRANHSLDVSFYFRTSAPSGVFLENMGGPFCRWRRPYVRVELNTSRDVVFAFDIGNGDENLTVHSDDFEFNDDEWHLVRAEINVKQARLRVDHRPWVLRPMPLQTYIWLVYDQPLYVGSAELKRRPFVGCLRAMRLNGVTLNLEGRANASEGTFPNCTGHCTHPRFPCFHGGRCVERYSYYTCDCDLTAFDGPYCNHDIGGFFETGTWMRYNLQSALRSAAREFSHMLSRPVPGYEPGYVPGYDTPGYVPGYHGPGYRLPEYPRPGRPVPGYRGPVYNVTGEEVSFSFSTNSAPAVLLYVSSFVRDYMAVLIKEDGTLQLRYQLGTSPYVYQLTTRPVTDGQPHSVNITRVYRNLFIQVDYFPLTEQKFSLLVDSQLDSPKALYLGRVMETGVIDPEIQRYNTPGFSGCLSGVRFNNVAPLKTHFRTPRPMTAELAEAMRVQGELSESNCGAMPRLVSEVPPELDPWYLPPDFPYYHDDGWIAILLGFLVAFLLLGLVGMLVLFYLQNHRYKGSYHTNEPKATHDSHPGGKAPLPPSGPAQAPAPTPAPTQLPTPAPAPAPAPASGPGPRDQNLPQILEESRSE.

The signal sequence occupies residues 1-20; sequence MMSLRLFSILLATVVSGAWG. The Extracellular portion of the chain corresponds to 21 to 1284; it reads WGYYGCNEEL…PYYHDDGWIA (1264 aa). The 144-residue stretch at 26 to 169 folds into the F5/8 type C domain; it reads CNEELVGPLY…IGLRLGIYGC (144 aa). Cysteine 26 and cysteine 169 are oxidised to a cystine. 3 N-linked (GlcNAc...) asparagine glycosylation sites follow: asparagine 121, asparagine 129, and asparagine 277. 2 Laminin G-like domains span residues 204-356 and 390-539; these read FKTE…AFRC and FRTW…FDTC. An intrachain disulfide couples cysteine 324 to cysteine 356. Residues asparagine 421, asparagine 500, and asparagine 519 are each glycosylated (N-linked (GlcNAc...) asparagine). Cystine bridges form between cysteine 507-cysteine 539, cysteine 545-cysteine 556, cysteine 550-cysteine 565, and cysteine 567-cysteine 577. The region spanning 545–577 is the EGF-like 1 domain; the sequence is CSPNMCEHDGRCYQSWDDFICYCELTGYKGVTC. A Fibrinogen C-terminal domain is found at 577-796; it reads CHEPLYKESC…NTISFHTGAA (220 aa). Asparagine 598, asparagine 654, asparagine 665, asparagine 764, asparagine 805, asparagine 844, asparagine 861, asparagine 949, and asparagine 957 each carry an N-linked (GlcNAc...) asparagine glycan. The Laminin G-like 3 domain maps to 814-958; sequence FRTSAPSGVF…NASEGTFPNC (145 aa). Intrachain disulfides connect cysteine 931–cysteine 958, cysteine 962–cysteine 975, cysteine 969–cysteine 984, and cysteine 986–cysteine 996. An EGF-like 2 domain is found at 962 to 996; the sequence is CTHPRFPCFHGGRCVERYSYYTCDCDLTAFDGPYC. Residues asparagine 1079 and asparagine 1148 are each glycosylated (N-linked (GlcNAc...) asparagine). The 163-residue stretch at 1089-1251 folds into the Laminin G-like 4 domain; sequence FSTNSAPAVL…VQGELSESNC (163 aa). An intrachain disulfide couples cysteine 1210 to cysteine 1251. A helical transmembrane segment spans residues 1285-1305; the sequence is ILLGFLVAFLLLGLVGMLVLF. Over 1306-1385 the chain is Cytoplasmic; the sequence is YLQNHRYKGS…PQILEESRSE (80 aa). A disordered region spans residues 1317 to 1385; sequence HTNEPKATHD…PQILEESRSE (69 aa). Over residues 1319–1329 the composition is skewed to basic and acidic residues; sequence NEPKATHDSHP. Residues 1334-1367 are compositionally biased toward pro residues; the sequence is PLPPSGPAQAPAPTPAPTQLPTPAPAPAPAPASG. The SH3-binding signature appears at 1334-1370; sequence PLPPSGPAQAPAPTPAPTQLPTPAPAPAPAPASGPGP. Phosphoserine is present on serine 1384.

It belongs to the neurexin family. In terms of assembly, interacts with CNTN1/contactin in cis form. In terms of tissue distribution, expressed in brain. In myelinated nerve fibers predominantly found in paranodal axoglial junctions. In the internodal region of myelinated axons in the CNS and the PNS also found as a thin line apposing the inner mesaxon of the myelin sheath. In PNS neurons this line forms a circumferential ring that apposes the innermost aspect of Schmidt-Lanterman incisures.

It localises to the membrane. The protein localises to the cell junction. It is found in the paranodal septate junction. Functionally, required, with CNTNAP2, for radial and longitudinal organization of myelinated axons. Plays a role in the formation of functional distinct domains critical for saltatory conduction of nerve impulses in myelinated nerve fibers. Demarcates the paranodal region of the axo-glial junction. In association with contactin involved in the signaling between axons and myelinating glial cells. The sequence is that of Contactin-associated protein 1 (Cntnap1) from Mus musculus (Mouse).